Here is a 604-residue protein sequence, read N- to C-terminus: Serine/threonine-protein kinase A-Raf (604 aa).

Positions 19–91 constitute an RBD domain; sequence GTVKVYLPNK…DGEELIVEVL (73 aa). The segment at 98-144 adopts a Phorbol-ester/DAG-type zinc-finger fold; the sequence is MHNFVRKTFFSLAFCDFCLKFLFHGFRCQTCGYKFHQHCSSKVPTVC. Zn(2+)-binding residues include His99, Cys112, Cys115, Cys125, Cys128, His133, Cys136, and Cys144. Phosphoserine occurs at positions 157 and 162. Disordered regions lie at residues 177 to 222 and 241 to 288; these read NELL…HMVS and TDAA…EKKK. At Thr181 the chain carries Phosphothreonine. Ser186 carries the phosphoserine modification. A compositionally biased stretch (polar residues) spans 210-222; it reads IRSTSTPNVHMVS. Residues 252–265 show a composition bias toward low complexity; that stretch reads PRGSPSPASVSSGR. Ser255 and Ser267 each carry phosphoserine. Residues 272 to 287 show a composition bias toward basic and acidic residues; the sequence is LPSEQRERKSLADEKK. A Protein kinase domain is found at 308–568; that stretch reads VQLLKRIGTG…PQILATIELL (261 aa). ATP-binding positions include 314 to 322 and Lys334; that span reads IGTGSFGTV. Phosphothreonine is present on Thr316. Asp427 functions as the Proton acceptor in the catalytic mechanism.

Belongs to the protein kinase superfamily. TKL Ser/Thr protein kinase family. RAF subfamily. As to quaternary structure, interacts with TH1L/NELFD. Zn(2+) serves as cofactor. Post-translationally, dephosphorylation by the SHOC2-MRAS-PP1c (SMP) complex consisting of SHOC2, GTP-bound M-Ras/MRAS and the catalytic subunit of protein phosphatase 1 (PPP1CA, PPP1CB or PPP1CC); this relieves inactivation and stimulates kinase activity.

It catalyses the reaction L-seryl-[protein] + ATP = O-phospho-L-seryl-[protein] + ADP + H(+). The catalysed reaction is L-threonyl-[protein] + ATP = O-phospho-L-threonyl-[protein] + ADP + H(+). Involved in the transduction of mitogenic signals from the cell membrane to the nucleus. May also regulate the TOR signaling cascade. Phosphorylates PFKFB2. In Mus musculus (Mouse), this protein is Serine/threonine-protein kinase A-Raf (Araf).